A 114-amino-acid chain; its full sequence is Ribonuclease P protein component (114 aa).

The protein belongs to the RnpA family. As to quaternary structure, consists of a catalytic RNA component (M1 or rnpB) and a protein subunit.

It catalyses the reaction Endonucleolytic cleavage of RNA, removing 5'-extranucleotides from tRNA precursor.. In terms of biological role, RNaseP catalyzes the removal of the 5'-leader sequence from pre-tRNA to produce the mature 5'-terminus. It can also cleave other RNA substrates such as 4.5S RNA. The protein component plays an auxiliary but essential role in vivo by binding to the 5'-leader sequence and broadening the substrate specificity of the ribozyme. This is Ribonuclease P protein component from Limosilactobacillus fermentum (strain NBRC 3956 / LMG 18251) (Lactobacillus fermentum).